The sequence spans 414 residues: Serine hydroxymethyltransferase (414 aa).

(6S)-5,6,7,8-tetrahydrofolate-binding positions include Leu116 and Gly120–Leu122. Position 224 is an N6-(pyridoxal phosphate)lysine (Lys224). (6S)-5,6,7,8-tetrahydrofolate-binding positions include Glu240 and Ser348 to Phe350.

Belongs to the SHMT family. In terms of assembly, homodimer. Requires pyridoxal 5'-phosphate as cofactor.

It localises to the cytoplasm. The catalysed reaction is (6R)-5,10-methylene-5,6,7,8-tetrahydrofolate + glycine + H2O = (6S)-5,6,7,8-tetrahydrofolate + L-serine. It functions in the pathway one-carbon metabolism; tetrahydrofolate interconversion. It participates in amino-acid biosynthesis; glycine biosynthesis; glycine from L-serine: step 1/1. Functionally, catalyzes the reversible interconversion of serine and glycine with tetrahydrofolate (THF) serving as the one-carbon carrier. This reaction serves as the major source of one-carbon groups required for the biosynthesis of purines, thymidylate, methionine, and other important biomolecules. Also exhibits THF-independent aldolase activity toward beta-hydroxyamino acids, producing glycine and aldehydes, via a retro-aldol mechanism. This Campylobacter jejuni subsp. jejuni serotype O:2 (strain ATCC 700819 / NCTC 11168) protein is Serine hydroxymethyltransferase.